Here is a 183-residue protein sequence, read N- to C-terminus: Ribulose bisphosphate carboxylase small subunit, chloroplastic 1 (183 aa).

The transit peptide at 1–58 (MASSMLSNAAMATTAATAGAQASMVAPFNGLKSFATFPITKKSSNDFSSLPSNGGRVQ) directs the protein to the chloroplast.

It belongs to the RuBisCO small chain family. In terms of assembly, heterohexadecamer of 8 large and 8 small subunits.

It localises to the plastid. Its subcellular location is the chloroplast. Its function is as follows. RuBisCO catalyzes two reactions: the carboxylation of D-ribulose 1,5-bisphosphate, the primary event in carbon dioxide fixation, as well as the oxidative fragmentation of the pentose substrate. Both reactions occur simultaneously and in competition at the same active site. Although the small subunit is not catalytic it is essential for maximal activity. The polypeptide is Ribulose bisphosphate carboxylase small subunit, chloroplastic 1 (Amaranthus hypochondriacus (Prince-of-Wales feather)).